A 259-amino-acid polypeptide reads, in one-letter code: V-type proton ATPase subunit D (259 aa).

The tract at residues 214–259 (KLKEQEAAQRALEGPPKEEAGGTHSENQPPRNLLAVEEDNLPVLFN) is disordered.

It belongs to the V-ATPase D subunit family. In terms of assembly, V-ATPase is a heteromultimeric enzyme made up of two complexes: the ATP-hydrolytic V1 complex and the proton translocation V0 complex. The V1 complex consists of three catalytic AB heterodimers that form a heterohexamer, three peripheral stalks each consisting of EG heterodimers, one central rotor including subunits D and F, and the regulatory subunits C and H. The proton translocation complex V0 consists of the proton transport subunit a, a ring of proteolipid subunits c9c'', rotary subunit d, and The proton translocation complex V0 consists of the proton transport subunit a, a ring of proteolipid subunits c9c'', rotary subunit d, subunits e and f, and the accessory subunits vah-19/Ac45 and vah-20/PRR.

Subunit of the V1 complex of vacuolar(H+)-ATPase (V-ATPase), a multisubunit enzyme composed of a peripheral complex (V1) that hydrolyzes ATP and a membrane integral complex (V0) that translocates protons. V-ATPase is responsible for acidifying and maintaining the pH of intracellular compartments and in some cell types, is targeted to the plasma membrane, where it is responsible for acidifying the extracellular environment. The polypeptide is V-type proton ATPase subunit D (Caenorhabditis briggsae).